We begin with the raw amino-acid sequence, 556 residues long: 2-isopropylmalate synthase (556 aa).

The region spanning 33–307 (PIWCSSDLRD…HPQLDFSDID (275 aa)) is the Pyruvate carboxyltransferase domain. The Mg(2+) site is built by D42, H246, H248, and N282. The tract at residues 439–556 (ATSPYALASH…AVTQAEAKAA (118 aa)) is regulatory domain.

Belongs to the alpha-IPM synthase/homocitrate synthase family. LeuA type 2 subfamily. Homodimer. The cofactor is Mg(2+).

The protein localises to the cytoplasm. It carries out the reaction 3-methyl-2-oxobutanoate + acetyl-CoA + H2O = (2S)-2-isopropylmalate + CoA + H(+). It functions in the pathway amino-acid biosynthesis; L-leucine biosynthesis; L-leucine from 3-methyl-2-oxobutanoate: step 1/4. In terms of biological role, catalyzes the condensation of the acetyl group of acetyl-CoA with 3-methyl-2-oxobutanoate (2-ketoisovalerate) to form 3-carboxy-3-hydroxy-4-methylpentanoate (2-isopropylmalate). The chain is 2-isopropylmalate synthase from Pseudomonas paraeruginosa (strain DSM 24068 / PA7) (Pseudomonas aeruginosa (strain PA7)).